Consider the following 382-residue polypeptide: 1-deoxy-D-xylulose 5-phosphate reductoisomerase (382 aa).

The NADPH site is built by Ser-10, Gly-11, Ser-12, Ile-13, Gly-36, Lys-37, Asn-38, and Asn-121. Lys-122 serves as a coordination point for 1-deoxy-D-xylulose 5-phosphate. Residue Glu-123 participates in NADPH binding. Residue Asp-147 coordinates Mn(2+). The 1-deoxy-D-xylulose 5-phosphate site is built by Ser-148, Glu-149, Ser-173, and His-196. A Mn(2+)-binding site is contributed by Glu-149. Residue Gly-202 participates in NADPH binding. 1-deoxy-D-xylulose 5-phosphate is bound by residues Ser-209, Asn-214, Lys-215, and Glu-218. Glu-218 is a binding site for Mn(2+).

Belongs to the DXR family. Requires Mg(2+) as cofactor. Mn(2+) is required as a cofactor.

The enzyme catalyses 2-C-methyl-D-erythritol 4-phosphate + NADP(+) = 1-deoxy-D-xylulose 5-phosphate + NADPH + H(+). Its pathway is isoprenoid biosynthesis; isopentenyl diphosphate biosynthesis via DXP pathway; isopentenyl diphosphate from 1-deoxy-D-xylulose 5-phosphate: step 1/6. Functionally, catalyzes the NADPH-dependent rearrangement and reduction of 1-deoxy-D-xylulose-5-phosphate (DXP) to 2-C-methyl-D-erythritol 4-phosphate (MEP). The protein is 1-deoxy-D-xylulose 5-phosphate reductoisomerase of Geobacillus kaustophilus (strain HTA426).